The chain runs to 271 residues: Putative pyruvate, phosphate dikinase regulatory protein 2 (271 aa).

151-158 (GVSRTSKT) is an ADP binding site.

It belongs to the pyruvate, phosphate/water dikinase regulatory protein family. PDRP subfamily.

The catalysed reaction is N(tele)-phospho-L-histidyl/L-threonyl-[pyruvate, phosphate dikinase] + ADP = N(tele)-phospho-L-histidyl/O-phospho-L-threonyl-[pyruvate, phosphate dikinase] + AMP + H(+). The enzyme catalyses N(tele)-phospho-L-histidyl/O-phospho-L-threonyl-[pyruvate, phosphate dikinase] + phosphate + H(+) = N(tele)-phospho-L-histidyl/L-threonyl-[pyruvate, phosphate dikinase] + diphosphate. Functionally, bifunctional serine/threonine kinase and phosphorylase involved in the regulation of the pyruvate, phosphate dikinase (PPDK) by catalyzing its phosphorylation/dephosphorylation. The protein is Putative pyruvate, phosphate dikinase regulatory protein 2 of Staphylococcus haemolyticus (strain JCSC1435).